We begin with the raw amino-acid sequence, 238 residues long: Probable septum site-determining protein MinC (238 aa).

It belongs to the MinC family. In terms of assembly, interacts with MinD and FtsZ.

In terms of biological role, cell division inhibitor that blocks the formation of polar Z ring septums. Rapidly oscillates between the poles of the cell to destabilize FtsZ filaments that have formed before they mature into polar Z rings. Prevents FtsZ polymerization. This chain is Probable septum site-determining protein MinC, found in Xylella fastidiosa (strain M23).